The sequence spans 182 residues: Small ribosomal subunit protein uS4 (182 aa).

Disordered regions lie at residues 1–23 (MGHP…ADRI) and 158–182 (SSVA…KDEE). One can recognise an S4 RNA-binding domain in the interval 103–170 (RRLQSLVFKR…AKQFETQETE (68 aa)). Over residues 167–182 (QETEEVAAEEEPKDEE) the composition is skewed to acidic residues.

The protein belongs to the universal ribosomal protein uS4 family. As to quaternary structure, part of the 30S ribosomal subunit. Contacts protein S5. The interaction surface between S4 and S5 is involved in control of translational fidelity.

Its function is as follows. One of the primary rRNA binding proteins, it binds directly to 16S rRNA where it nucleates assembly of the body of the 30S subunit. In terms of biological role, with S5 and S12 plays an important role in translational accuracy. The polypeptide is Small ribosomal subunit protein uS4 (Methanosphaera stadtmanae (strain ATCC 43021 / DSM 3091 / JCM 11832 / MCB-3)).